The chain runs to 289 residues: Nodulation protein NolT (289 aa).

An N-terminal signal peptide occupies residues 1 to 33 (MFGSAHGDTTSSDTSGRRPLRLVVLPLLLALSS). C34 carries N-palmitoyl cysteine lipidation. C34 carries S-diacylglycerol cysteine lipidation. A helical transmembrane segment spans residues 233–253 (VAVGVGAAVFAVTCYLLFIVL).

Belongs to the YscJ lipoprotein family.

The protein localises to the cell outer membrane. In terms of biological role, regulates cultivar-specific nodulation of soybean. The polypeptide is Nodulation protein NolT (nolT) (Rhizobium fredii (Sinorhizobium fredii)).